Reading from the N-terminus, the 243-residue chain is Aspartate/glutamate leucyltransferase (243 aa).

It belongs to the R-transferase family. Bpt subfamily.

Its subcellular location is the cytoplasm. It catalyses the reaction N-terminal L-glutamyl-[protein] + L-leucyl-tRNA(Leu) = N-terminal L-leucyl-L-glutamyl-[protein] + tRNA(Leu) + H(+). The enzyme catalyses N-terminal L-aspartyl-[protein] + L-leucyl-tRNA(Leu) = N-terminal L-leucyl-L-aspartyl-[protein] + tRNA(Leu) + H(+). In terms of biological role, functions in the N-end rule pathway of protein degradation where it conjugates Leu from its aminoacyl-tRNA to the N-termini of proteins containing an N-terminal aspartate or glutamate. The polypeptide is Aspartate/glutamate leucyltransferase (Teredinibacter turnerae (strain ATCC 39867 / T7901)).